The chain runs to 1671 residues: DENN domain-containing protein Crag (1671 aa).

An MABP domain is found at isoleucine 39 to methionine 195. The region spanning valine 187 to isoleucine 364 is the uDENN domain. The region spanning proline 385 to threonine 521 is the cDENN domain. One can recognise a dDENN domain in the interval leucine 523–histidine 632. Disordered regions lie at residues glutamine 997 to serine 1160, alanine 1245 to glutamate 1311, and valine 1415 to asparagine 1435. Composition is skewed to acidic residues over residues glycine 1011–tyrosine 1023 and tyrosine 1050–aspartate 1061. The segment covering arginine 1072–aspartate 1089 has biased composition (polar residues). A compositionally biased stretch (low complexity) spans alanine 1100–glutamine 1119. A compositionally biased stretch (polar residues) spans arginine 1136–glycine 1147. The segment covering asparagine 1254 to glutamine 1277 has biased composition (basic residues). Residues alanine 1281 to serine 1301 are compositionally biased toward basic and acidic residues.

In terms of assembly, interacts with Cam. Interacts with Rab10. Interacts (via the DENN domains) with Rab11. Expressed in the adult head and body.

It localises to the cytoplasm. Its subcellular location is the cell cortex. The protein resides in the early endosome. The protein localises to the recycling endosome. It is found in the cytoplasmic granule. Calmodulin-binding protein that acts as a guanine exchange factor for Rab10 and Rab11. Essential for maintenance of adult photoreceptor cells. Upon light stimulation, required for trafficking of newly synthesized ninaE (Rh1) from the trans-Golgi network to rhabdomere membranes via Rab11-dependent vesicular transport. During egg development, essential for establishing and maintaining epithelial cell polarity by regulating the correct polarized deposition of basal membrane (BM) proteins in follicular epithelial (FE) cells. Functions by targeting Rab10 to the basal cytoplasm, where it restricts the secretion of BM proteins such as trol/Pcan and vkg/Coll IV to the basal surface. Appears to be involved in regulating the levels and distribution of the guanine nucleotide exchange factor strat, however the two proteins appear to have independent roles in regulating polarized BM protein secretion in the FE. The sequence is that of DENN domain-containing protein Crag from Drosophila melanogaster (Fruit fly).